Consider the following 184-residue polypeptide: Holliday junction branch migration complex subunit RuvA (184 aa).

The tract at residues 1 to 64 is domain I; that stretch reads MIKAIEGIIT…EDANLLYGFI (64 aa). A domain II region spans residues 65 to 137; that stretch reads KESEQRIFEM…LSDAKFGEIN (73 aa). A region of interest (flexible linker) is located at residue Asn-137. Positions 138-184 are domain III; the sequence is SMPSYQNEAFMALESLGFKRDRISKVLNECSSNDTASLIKEALKKLA.

It belongs to the RuvA family. In terms of assembly, homotetramer. Forms an RuvA(8)-RuvB(12)-Holliday junction (HJ) complex. HJ DNA is sandwiched between 2 RuvA tetramers; dsDNA enters through RuvA and exits via RuvB. An RuvB hexamer assembles on each DNA strand where it exits the tetramer. Each RuvB hexamer is contacted by two RuvA subunits (via domain III) on 2 adjacent RuvB subunits; this complex drives branch migration. In the full resolvosome a probable DNA-RuvA(4)-RuvB(12)-RuvC(2) complex forms which resolves the HJ.

The protein resides in the cytoplasm. In terms of biological role, the RuvA-RuvB-RuvC complex processes Holliday junction (HJ) DNA during genetic recombination and DNA repair, while the RuvA-RuvB complex plays an important role in the rescue of blocked DNA replication forks via replication fork reversal (RFR). RuvA specifically binds to HJ cruciform DNA, conferring on it an open structure. The RuvB hexamer acts as an ATP-dependent pump, pulling dsDNA into and through the RuvAB complex. HJ branch migration allows RuvC to scan DNA until it finds its consensus sequence, where it cleaves and resolves the cruciform DNA. In Campylobacter fetus subsp. fetus (strain 82-40), this protein is Holliday junction branch migration complex subunit RuvA.